Here is a 276-residue protein sequence, read N- to C-terminus: Phospholipid phosphatase 2 (276 aa).

Residues 1-4 (MERR) lie on the Cytoplasmic side of the membrane. The chain crosses the membrane as a helical span at residues 5–25 (WVFVLLDVLCVLVASLPFIIL). Residues 26–51 (TLVNAPYKRGFYCGDDSIRYPYRPDT) lie on the Lumenal side of the membrane. The helical transmembrane segment at 52 to 72 (ITHGLMAGVIITATVVLVSSG) threads the bilayer. Residues 73 to 87 (EAYLVYTDRLYSRSD) are Cytoplasmic-facing. The helical transmembrane segment at 88 to 108 (FNNYVAAIYKVLGTFLFGAAV) threads the bilayer. The Lumenal segment spans residues 109–161 (SQSLTDLAKYMIGRLRPSFLAVCDPDWSRVNCSGYVQVEVCRGSPANVTEARL). The tract at residues 117–125 (KYMIGRLRP) is phosphatase sequence motif I. N-linked (GlcNAc...) asparagine glycans are attached at residues Asn139 and Asn155. The chain crosses the membrane as a helical span at residues 162-182 (SFYSGHSSFGMYCMLFLALYV). The tract at residues 164 to 167 (YSGH) is phosphatase sequence motif II. The active-site Proton donors is His167. Residues 183–189 (QARLCWK) lie on the Cytoplasmic side of the membrane. The chain crosses the membrane as a helical span at residues 190–210 (WARLLRPTVQFFLVAFAIYVG). Over 211 to 225 (YTRVSDNKHHWSDVL) the chain is Lumenal. Residues 212–223 (TRVSDNKHHWSD) form a phosphatase sequence motif III region. His219 serves as the catalytic Nucleophile. Residues 226-246 (VGLLQGALVACLTVCYVSDFF) form a helical membrane-spanning segment. At 247–276 (KSRPPQSCQENEESERKPSLSLTLTLGDRP) the chain is on the cytoplasmic side. The interval 252-276 (QSCQENEESERKPSLSLTLTLGDRP) is disordered.

Belongs to the PA-phosphatase related phosphoesterase family. Forms functional homodimers and homooligomers. Can also form heterooligomers with PLPP1 and PLPP3. N-glycosylated. In terms of tissue distribution, expressed in the brain.

The protein localises to the membrane. Its subcellular location is the cell membrane. It is found in the early endosome membrane. It localises to the endoplasmic reticulum membrane. It carries out the reaction a 1,2-diacyl-sn-glycero-3-phosphate + H2O = a 1,2-diacyl-sn-glycerol + phosphate. The catalysed reaction is 1,2-dihexadecanoyl-sn-glycero-3-phosphate + H2O = 1,2-dihexadecanoyl-sn-glycerol + phosphate. It catalyses the reaction 1,2-di-(9Z-octadecenoyl)-sn-glycero-3-phosphate + H2O = 1,2-di-(9Z-octadecenoyl)-sn-glycerol + phosphate. The enzyme catalyses a monoacyl-sn-glycero-3-phosphate + H2O = a monoacylglycerol + phosphate. It carries out the reaction (9Z)-octadecenoyl-sn-glycero-3-phosphate + H2O = (9Z-octadecenoyl)-glycerol + phosphate. The catalysed reaction is sphing-4-enine 1-phosphate + H2O = sphing-4-enine + phosphate. It catalyses the reaction an N-acylsphing-4-enine 1-phosphate + H2O = an N-acylsphing-4-enine + phosphate. The enzyme catalyses N-(octanoyl)-sphing-4-enine-1-phosphate + H2O = N-octanoylsphing-4-enine + phosphate. It carries out the reaction N-(9Z-octadecenoyl)-ethanolamine phosphate + H2O = N-(9Z-octadecenoyl) ethanolamine + phosphate. It functions in the pathway lipid metabolism; phospholipid metabolism. Magnesium-independent phospholipid phosphatase. Insensitive to N-ethylmaleimide. In terms of biological role, magnesium-independent phospholipid phosphatase that catalyzes the dephosphorylation of a variety of glycerolipid and sphingolipid phosphate esters including phosphatidate/PA, lysophosphatidate/LPA, sphingosine 1-phosphate/S1P and ceramide 1-phosphate/C1P. Has no apparent extracellular phosphatase activity and therefore most probably acts intracellularly. Also acts on N-oleoyl ethanolamine phosphate/N-(9Z-octadecenoyl)-ethanolamine phosphate, a potential physiological compound. Through dephosphorylation of these bioactive lipid mediators produces new bioactive compounds and may regulate signal transduction in different cellular processes. Indirectly regulates, for instance, cell cycle G1/S phase transition through its phospholipid phosphatase activity. This chain is Phospholipid phosphatase 2, found in Rattus norvegicus (Rat).